A 693-amino-acid chain; its full sequence is Endoprotease bli (693 aa).

The first 20 residues, 1-20, serve as a signal peptide directing secretion; that stretch reads MYWQLVRILVLFDCLQKILA. The propeptide at 21 to 116 is inhibition peptide; sequence IEHDSICIAD…EQRPRVRRKR (96 aa). Aspartate 161 lines the Ca(2+) pocket. The 316-residue stretch at 167-482 folds into the Peptidase S8 domain; that stretch reads QWYLNNGAQG…YGLMDAGALV (316 aa). Asparagine 194 is a glycosylation site (N-linked (GlcNAc...) asparagine). Aspartate 201 (charge relay system) is an active-site residue. Residue aspartate 202 participates in substrate binding. Residues aspartate 210, aspartate 222, aspartate 227, and aspartate 229 each coordinate Ca(2+). The segment at 215–242 is disordered; that stretch reads YDPLASTDINGHDDDPTPQDDGDNKHGT. 237 to 238 contacts substrate; that stretch reads DN. Histidine 240 (charge relay system) is an active-site residue. 4 residues coordinate Ca(2+): isoleucine 251, asparagine 254, tyrosine 256, and glycine 258. 2 disulfide bridges follow: cysteine 257–cysteine 406 and cysteine 349–cysteine 379. Substrate is bound by residues glutamate 282, 299 to 304, aspartate 310, and 338 to 341; these read SWGPED and ASGN. Aspartate 304 is a Ca(2+) binding site. Residue aspartate 347 participates in Ca(2+) binding. Positions 352 and 354 each coordinate substrate. Glutamate 377 serves as a coordination point for Ca(2+). Serine 414 serves as the catalytic Charge relay system. Serine 414 lines the substrate pocket. N-linked (GlcNAc...) asparagine glycosylation is found at asparagine 433 and asparagine 518. The region spanning 490 to 628 is the P/Homo B domain; that stretch reads TVPEQHICTY…SLLLYGTAEP (139 aa). A disulfide bridge links cysteine 497 with cysteine 526. Residues 629–693 are disordered; that stretch reads AQPNDPRHSS…LVSAQPELRV (65 aa). Over residues 668–681 the composition is skewed to basic and acidic residues; it reads DSRDWQPKKVENKK.

It belongs to the peptidase S8 family. Furin subfamily. Ca(2+) serves as cofactor. N-glycosylated. Post-translationally, the inhibition peptide, which plays the role of an intramolecular chaperone, is probably autocatalytically removed in the endoplasmic reticulum (ER) and remains non-covalently bound as a potent autoinhibitor. Probably following transport to the trans Golgi, a second cleavage within the inhibition propeptide results in propeptide dissociation and bli activation.

The protein localises to the secreted. It catalyses the reaction Release of mature proteins from their proproteins by cleavage of -Arg-Xaa-Yaa-Arg-|-Zaa- bonds, where Xaa can be any amino acid and Yaa is Arg or Lys. Releases albumin, complement component C3 and von Willebrand factor from their respective precursors.. Its activity is regulated as follows. Inhibited by the propeptide before the second cleavage. Inhibited by ethylenediaminetetraacetic acid (EDTA), ZnSO(4) and chloroketone DEC-RVKR-CMK. Functionally, serine endoprotease which cleaves substrates at the RX(K/R)R consensus motif. The chain is Endoprotease bli from Onchocerca volvulus.